The sequence spans 387 residues: Eukaryotic translation initiation factor 3 subunit M (387 aa).

The 160-residue stretch at 181-340 folds into the PCI domain; sequence LSSKVMIELL…RKVHISSTMH (160 aa).

The protein belongs to the eIF-3 subunit M family. As to quaternary structure, component of the eukaryotic translation initiation factor 3 (eIF-3) complex. The eIF-3 complex interacts with pix.

The protein localises to the cytoplasm. The protein resides in the golgi apparatus. Functionally, component of the eukaryotic translation initiation factor 3 (eIF-3) complex, which is involved in protein synthesis of a specialized repertoire of mRNAs and, together with other initiation factors, stimulates binding of mRNA and methionyl-tRNAi to the 40S ribosome. The eIF-3 complex specifically targets and initiates translation of a subset of mRNAs involved in cell proliferation. The protein is Eukaryotic translation initiation factor 3 subunit M of Drosophila pseudoobscura pseudoobscura (Fruit fly).